The chain runs to 682 residues: tRNA(Met) cytidine acetyltransferase TmcA (682 aa).

ATP is bound by residues Gln176, 198-207 (GRGKSTLAGM), and Arg320. The 178-residue stretch at 357 to 534 (QQQWIQQPEL…SGCYTAMAIF (178 aa)) folds into the N-acetyltransferase domain. Acetyl-CoA is bound by residues 462-464 (VAV) and Glu502.

This sequence belongs to the RNA cytidine acetyltransferase family. TmcA subfamily.

It localises to the cytoplasm. The enzyme catalyses cytidine(34) in elongator tRNA(Met) + acetyl-CoA + ATP + H2O = N(4)-acetylcytidine(34) in elongator tRNA(Met) + ADP + phosphate + CoA + H(+). Catalyzes the formation of N(4)-acetylcytidine (ac(4)C) at the wobble position of tRNA(Met), by using acetyl-CoA as an acetyl donor and ATP (or GTP). This is tRNA(Met) cytidine acetyltransferase TmcA from Photorhabdus asymbiotica subsp. asymbiotica (strain ATCC 43949 / 3105-77) (Xenorhabdus luminescens (strain 2)).